A 509-amino-acid polypeptide reads, in one-letter code: uncharacterized protein (509 aa).

One can recognise an RNase NYN domain in the interval 358 to 480 (RRIVIIDAIS…IIPFIVENGE (123 aa)).

This is an uncharacterized protein from Methanocaldococcus jannaschii (strain ATCC 43067 / DSM 2661 / JAL-1 / JCM 10045 / NBRC 100440) (Methanococcus jannaschii).